The sequence spans 855 residues: Envelope glycoprotein gp160 (855 aa).

Residues 1 to 31 form the signal peptide; sequence MTARGTRKNYQRLWRWGTMLLGMLMICSAAE. At 32 to 683 the chain is on the extracellular side; the sequence is NLWVTVYYGV…ITNWLWYIRI (652 aa). A disulfide bridge links Cys-53 with Cys-73. N-linked (GlcNAc...) asparagine; by host glycosylation is found at Asn-87, Asn-134, Asn-142, Asn-145, Asn-161, Asn-165, Asn-192, Asn-202, Asn-239, Asn-246, Asn-267, Asn-281, Asn-294, Asn-300, Asn-306, Asn-336, and Asn-359. 5 disulfide bridges follow: Cys-118–Cys-210, Cys-125–Cys-201, Cys-130–Cys-162, Cys-223–Cys-252, and Cys-233–Cys-244. The segment at 130-161 is V1; that stretch reads CTDVNTTSSSLRNATNTTSSSWETMEKGELKN. Residues 162 to 201 form a V2 region; it reads CSFNTTTSIRDKMQEQYALFYKLDVLPIDKNDTKFRLIHC. Residues 301 to 334 form a V3 region; that stretch reads CTRPNNNTRNRISIGPGRAFHTTKQIIGDIRQAH. A disulfide bridge links Cys-301 with Cys-335. The interval 367-377 is CD4-binding loop; sequence SSGGDPEIVMH. Disulfide bonds link Cys-381–Cys-442 and Cys-388–Cys-415. Residues 388–415 are V4; it reads CNTSQLFNSTWNDTTRANSTEVTITLPC. Residues Asn-389, Asn-395, Asn-399, Asn-405, and Asn-458 are each glycosylated (N-linked (GlcNAc...) asparagine; by host). V5 stretches follow at residues 458 to 469 and 460 to 469; these read NTTNGIEIFRPA and TNGIEIFRPA. Residues 510-531 form a fusion peptide region; the sequence is AVGMLGAMFLGFLGAAGSTMGA. The tract at residues 573–591 is immunosuppression; sequence KQLQARVLAVERYLKDQQL. Residues Cys-597 and Cys-603 are joined by a disulfide bond. N-linked (GlcNAc...) asparagine; by host glycans are attached at residues Asn-610, Asn-615, Asn-624, and Asn-636. The stretch at 632–666 forms a coiled coil; the sequence is REIDNYTHLIYTLIEESQNQQEKNEQELLELDKWA. An MPER; binding to GalCer region spans residues 661-682; that stretch reads ELDKWAGLWSWFSITNWLWYIR. A helical membrane pass occupies residues 684–704; that stretch reads FIIIVGGLVGLRIVFAVLSIV. At 705-855 the chain is on the cytoplasmic side; that stretch reads NRVRQGYSPL…IRQGLERALL (151 aa). The YXXL motif; contains endocytosis signal signature appears at 711–714; it reads YSPL. Residues 718–742 are disordered; sequence TRLPTQRGPDRPEGIEEEGGERDRD. Residue Cys-763 is the site of S-palmitoyl cysteine; by host attachment. Residues 854–855 carry the Di-leucine internalization motif motif; it reads LL.

Belongs to the HIV-1 env protein family. The mature envelope protein (Env) consists of a homotrimer of non-covalently associated gp120-gp41 heterodimers. The resulting complex protrudes from the virus surface as a spike. There seems to be as few as 10 spikes on the average virion. Interacts with host CD4, CCR5 and CXCR4. Gp120 also interacts with the C-type lectins CD209/DC-SIGN and CLEC4M/DC-SIGNR (collectively referred to as DC-SIGN(R)). Gp120 and gp41 interact with GalCer. Gp120 interacts with host ITGA4/ITGB7 complex; on CD4+ T-cells, this interaction results in rapid activation of integrin ITGAL/LFA-1, which facilitates efficient cell-to-cell spreading of HIV-1. Gp120 interacts with cell-associated heparan sulfate; this interaction increases virus infectivity on permissive cells and may be involved in infection of CD4- cells. As to quaternary structure, the mature envelope protein (Env) consists of a homotrimer of non-covalently associated gp120-gp41 heterodimers. The resulting complex protrudes from the virus surface as a spike. There seems to be as few as 10 spikes on the average virion. Highly glycosylated by host. The high number of glycan on the protein is reffered to as 'glycan shield' because it contributes to hide protein sequence from adaptive immune system. In terms of processing, palmitoylation of the transmembrane protein and of Env polyprotein (prior to its proteolytic cleavage) is essential for their association with host cell membrane lipid rafts. Palmitoylation is therefore required for envelope trafficking to classical lipid rafts, but not for viral replication. Post-translationally, specific enzymatic cleavages in vivo yield mature proteins. Envelope glycoproteins are synthesized as an inactive precursor that is heavily N-glycosylated and processed likely by host cell furin in the Golgi to yield the mature SU and TM proteins. The cleavage site between SU and TM requires the minimal sequence [KR]-X-[KR]-R. About 2 of the 9 disulfide bonds of gp41 are reduced by P4HB/PDI, following binding to CD4 receptor.

The protein localises to the virion membrane. It localises to the host cell membrane. It is found in the host endosome membrane. Functionally, oligomerizes in the host endoplasmic reticulum into predominantly trimers. In a second time, gp160 transits in the host Golgi, where glycosylation is completed. The precursor is then proteolytically cleaved in the trans-Golgi and thereby activated by cellular furin or furin-like proteases to produce gp120 and gp41. Attaches the virus to the host lymphoid cell by binding to the primary receptor CD4. This interaction induces a structural rearrangement creating a high affinity binding site for a chemokine coreceptor like CXCR4 and/or CCR5. Acts as a ligand for CD209/DC-SIGN and CLEC4M/DC-SIGNR, which are respectively found on dendritic cells (DCs), and on endothelial cells of liver sinusoids and lymph node sinuses. These interactions allow capture of viral particles at mucosal surfaces by these cells and subsequent transmission to permissive cells. HIV subverts the migration properties of dendritic cells to gain access to CD4+ T-cells in lymph nodes. Virus transmission to permissive T-cells occurs either in trans (without DCs infection, through viral capture and transmission), or in cis (following DCs productive infection, through the usual CD4-gp120 interaction), thereby inducing a robust infection. In trans infection, bound virions remain infectious over days and it is proposed that they are not degraded, but protected in non-lysosomal acidic organelles within the DCs close to the cell membrane thus contributing to the viral infectious potential during DCs' migration from the periphery to the lymphoid tissues. On arrival at lymphoid tissues, intact virions recycle back to DCs' cell surface allowing virus transmission to CD4+ T-cells. In terms of biological role, acts as a class I viral fusion protein. Under the current model, the protein has at least 3 conformational states: pre-fusion native state, pre-hairpin intermediate state, and post-fusion hairpin state. During fusion of viral and target intracellular membranes, the coiled coil regions (heptad repeats) assume a trimer-of-hairpins structure, positioning the fusion peptide in close proximity to the C-terminal region of the ectodomain. The formation of this structure appears to drive apposition and subsequent fusion of viral and target cell membranes. Complete fusion occurs in host cell endosomes and is dynamin-dependent, however some lipid transfer might occur at the plasma membrane. The virus undergoes clathrin-dependent internalization long before endosomal fusion, thus minimizing the surface exposure of conserved viral epitopes during fusion and reducing the efficacy of inhibitors targeting these epitopes. Membranes fusion leads to delivery of the nucleocapsid into the cytoplasm. The protein is Envelope glycoprotein gp160 of Homo sapiens (Human).